The sequence spans 127 residues: Prefoldin subunit 6 (127 aa).

A2 bears the N-acetylalanine mark. K21 is modified (N6-acetyllysine). Position 66 is an N6-acetyllysine; alternate (K66). Residue K66 forms a Glycyl lysine isopeptide (Lys-Gly) (interchain with G-Cter in SUMO1); alternate linkage. A Glycyl lysine isopeptide (Lys-Gly) (interchain with G-Cter in SUMO2); alternate cross-link involves residue K66.

Belongs to the prefoldin subunit beta family. Heterohexamer of two PFD-alpha type and four PFD-beta type subunits. Component of the PAQosome complex which is responsible for the biogenesis of several protein complexes and which consists of R2TP complex members RUVBL1, RUVBL2, RPAP3 and PIH1D1, URI complex members PFDN2, PFDN6, PDRG1, UXT and URI1 as well as ASDURF, POLR2E and DNAAF10/WDR92.

In terms of biological role, binds specifically to cytosolic chaperonin (c-CPN) and transfers target proteins to it. Binds to nascent polypeptide chain and promotes folding in an environment in which there are many competing pathways for nonnative proteins. The protein is Prefoldin subunit 6 (Pfdn6) of Mus musculus (Mouse).